The primary structure comprises 323 residues: Beta-ketoacyl-[acyl-carrier-protein] synthase III (323 aa).

Residues C114 and H250 contribute to the active site. The tract at residues Q251–R255 is ACP-binding. Residue N280 is part of the active site.

The protein belongs to the thiolase-like superfamily. FabH family. In terms of assembly, homodimer.

The protein localises to the cytoplasm. It carries out the reaction malonyl-[ACP] + acetyl-CoA + H(+) = 3-oxobutanoyl-[ACP] + CO2 + CoA. Its pathway is lipid metabolism; fatty acid biosynthesis. In terms of biological role, catalyzes the condensation reaction of fatty acid synthesis by the addition to an acyl acceptor of two carbons from malonyl-ACP. Catalyzes the first condensation reaction which initiates fatty acid synthesis and may therefore play a role in governing the total rate of fatty acid production. Possesses both acetoacetyl-ACP synthase and acetyl transacylase activities. Its substrate specificity determines the biosynthesis of branched-chain and/or straight-chain of fatty acids. The chain is Beta-ketoacyl-[acyl-carrier-protein] synthase III from Hyphomonas neptunium (strain ATCC 15444).